The chain runs to 486 residues: Histidine--tRNA ligase, chloroplastic/mitochondrial (486 aa).

The protein belongs to the class-II aminoacyl-tRNA synthetase family.

The protein resides in the plastid. It is found in the chloroplast. Its subcellular location is the mitochondrion. The catalysed reaction is tRNA(His) + L-histidine + ATP = L-histidyl-tRNA(His) + AMP + diphosphate + H(+). This is Histidine--tRNA ligase, chloroplastic/mitochondrial from Arabidopsis thaliana (Mouse-ear cress).